A 379-amino-acid polypeptide reads, in one-letter code: Probable RNA 3'-terminal phosphate cyclase-like protein (379 aa).

It belongs to the RNA 3'-terminal cyclase family. Type 2 subfamily. In terms of assembly, part of the small subunit (SSU) processome, composed of more than 70 proteins and the RNA chaperone small nucleolar RNA (snoRNA) U3.

The protein resides in the nucleus. The protein localises to the nucleolus. Its function is as follows. Part of the small subunit (SSU) processome, first precursor of the small eukaryotic ribosomal subunit. During the assembly of the SSU processome in the nucleolus, many ribosome biogenesis factors, an RNA chaperone and ribosomal proteins associate with the nascent pre-rRNA and work in concert to generate RNA folding, modifications, rearrangements and cleavage as well as targeted degradation of pre-ribosomal RNA by the RNA exosome. Does not have cyclase activity. This Caenorhabditis elegans protein is Probable RNA 3'-terminal phosphate cyclase-like protein.